A 206-amino-acid chain; its full sequence is Small ribosomal subunit protein uS4 (206 aa).

A compositionally biased stretch (basic and acidic residues) spans 25 to 39 (DKLLDRKPNGPGKER). A disordered region spans residues 25 to 49 (DKLLDRKPNGPGKERGARKRGKTSV). The S4 RNA-binding domain maps to 95–157 (QRLDNTIYRM…KGIQNLIRHN (63 aa)).

The protein belongs to the universal ribosomal protein uS4 family. As to quaternary structure, part of the 30S ribosomal subunit. Contacts protein S5. The interaction surface between S4 and S5 is involved in control of translational fidelity.

Its function is as follows. One of the primary rRNA binding proteins, it binds directly to 16S rRNA where it nucleates assembly of the body of the 30S subunit. In terms of biological role, with S5 and S12 plays an important role in translational accuracy. In Treponema denticola (strain ATCC 35405 / DSM 14222 / CIP 103919 / JCM 8153 / KCTC 15104), this protein is Small ribosomal subunit protein uS4.